The chain runs to 180 residues: Large ribosomal subunit protein uL6 (180 aa).

Belongs to the universal ribosomal protein uL6 family. In terms of assembly, part of the 50S ribosomal subunit.

In terms of biological role, this protein binds to the 23S rRNA, and is important in its secondary structure. It is located near the subunit interface in the base of the L7/L12 stalk, and near the tRNA binding site of the peptidyltransferase center. The chain is Large ribosomal subunit protein uL6 from Anaeromyxobacter dehalogenans (strain 2CP-C).